Here is a 542-residue protein sequence, read N- to C-terminus: Chaperonin GroEL (542 aa).

ATP is bound by residues 29–32 (TLGP), 86–90 (DGTTT), G413, 476–478 (NAA), and D492.

The protein belongs to the chaperonin (HSP60) family. Forms a cylinder of 14 subunits composed of two heptameric rings stacked back-to-back. Interacts with the co-chaperonin GroES.

It localises to the cytoplasm. It catalyses the reaction ATP + H2O + a folded polypeptide = ADP + phosphate + an unfolded polypeptide.. In terms of biological role, together with its co-chaperonin GroES, plays an essential role in assisting protein folding. The GroEL-GroES system forms a nano-cage that allows encapsulation of the non-native substrate proteins and provides a physical environment optimized to promote and accelerate protein folding. This Bacillus cytotoxicus (strain DSM 22905 / CIP 110041 / 391-98 / NVH 391-98) protein is Chaperonin GroEL.